The sequence spans 545 residues: uncharacterized protein (545 aa).

2 stretches are compositionally biased toward basic and acidic residues: residues 34-44 and 53-63; these read PMNKQNEKLKT and PRNDYSRRVSR. Disordered stretches follow at residues 34–98, 269–296, and 415–444; these read PMNK…PESN, QNGTAGYSNSRKTSSPSYHKQSIPPQDS, and ERPQRKTEHVKTPEENLQTKNPTTMTSAPE. The segment covering 69–78 has biased composition (polar residues); that stretch reads TDSSEQQITA. Residues 415-428 show a composition bias toward basic and acidic residues; that stretch reads ERPQRKTEHVKTPE. The segment covering 429-441 has biased composition (polar residues); it reads ENLQTKNPTTMTS.

This is an uncharacterized protein from Mus musculus (Mouse).